The primary structure comprises 147 residues: Peptide methionine sulfoxide reductase MsrB (147 aa).

The MsrB domain occupies 8-131; the sequence is KEELKKILTE…NSASLKFIPK (124 aa). Cys120 functions as the Nucleophile in the catalytic mechanism.

This sequence belongs to the MsrB Met sulfoxide reductase family.

The enzyme catalyses L-methionyl-[protein] + [thioredoxin]-disulfide + H2O = L-methionyl-(R)-S-oxide-[protein] + [thioredoxin]-dithiol. In Clostridium perfringens (strain SM101 / Type A), this protein is Peptide methionine sulfoxide reductase MsrB.